The chain runs to 89 residues: uncharacterized protein (89 aa).

2 helical membrane-spanning segments follow: residues 1 to 21 (MFLALTSIAIPAAIVIPISLI) and 28 to 48 (GISLTFSMTIGFVGLILTIAA).

The protein localises to the cell membrane. This is an uncharacterized protein from Methanocaldococcus jannaschii (strain ATCC 43067 / DSM 2661 / JAL-1 / JCM 10045 / NBRC 100440) (Methanococcus jannaschii).